The sequence spans 432 residues: Cyclic GMP-AMP synthase (432 aa).

110-115 contributes to the GTP binding site; sequence QGSFQY. Positions 129 and 131 each coordinate Mg(2+). ATP is bound at residue arginine 180. Aspartate 191 contributes to the Mg(2+) binding site. Serine 255 contacts ATP. GTP is bound by residues lysine 283, serine 297, and aspartate 344. Glycine 432 participates in a covalent cross-link: Glycyl cysteine dithioester (Gly-Cys) (interchain with C-13 in Cap2). A Glycyl cysteine dithioester (Gly-Cys) (interchain with C-493 in Cap2) cross-link involves residue glycine 432. A Glycyl cysteine dithioester (Gly-Cys) (interchain with C-513 in Cap2) cross-link involves residue glycine 432. Glycine 432 participates in a covalent cross-link: Glycyl lysine isopeptide (Gly-Lys) (interchain with K-? in acceptor proteins).

This sequence belongs to the CD-NTase family. A02 subfamily. A Cap2 dimer is bound on either side by a DncV monomer. Mg(2+) serves as cofactor. In terms of processing, in bacteria expressing capV-dncV-cap2-cap3, this protein is conjugated to about 130 cellular proteins by Cap2, most of which are involved in metabolism; more conjugated protein is found in the absence of Cap3. Most conjugation occurs via an isopeptide bond with the epsilon-amine of Lys on the target protein, but Cys-conjugation also occurs, including to Cap2. Conjugation or deconjugation from cellular proteins does not change the DncV activity in vitro, but does so in vivo during infection. Post-translationally, (Microbial infection) During phage T4 infection is conjugated to at least 2 T4 proteins (fibritin (wac) and dexA.2).

It carries out the reaction GTP + ATP = 3',3'-cGAMP + 2 diphosphate. Its activity is regulated as follows. Primed for activation by Cap2 which conjugates it to cellular proteins. cGAMP production is induced in phage T4 infected cells in a manner that requires Cap2 and Cap3, as well as a C-terminal Ala or Gly residue in this protein. Cyclic nucleotide synthase (second messenger synthase) of a CBASS antivirus system. CBASS (cyclic oligonucleotide-based antiphage signaling system) provides immunity against bacteriophages. The CD-NTase protein (DncV, this protein) synthesizes cyclic nucleotides in response to infection; these serve as specific second messenger signals. The signals activate a diverse range of effectors, leading to bacterial cell death and thus abortive phage infection. A type II-A(GA) CBASS system. In terms of biological role, catalyzes the synthesis of 3',3'-cyclic GMP-AMP (cGAMP) from GTP and ATP, a second messenger in cell signal transduction. Its product controls the activity of cGAMP-activated phospholipase CapV, a patatin-like lipase that is a direct cGAMP receptor encoded in the dncV operon. Its function is as follows. Protects E.coli against phage infection. When capV and dncV are introduced in E.coli MG1655 there is 1000-fold protection against phage P1; protection against other phage (T2, T4, T5, T6 and lambda-vir) requires the 2 subsequent genes (cap2 and cap3). In another paper the capV-dncV-cap2-cap3 operon gives 10(4)-10(5)-fold protection against phages lambda, T2, T4 and T6, about 1000-fold protection against P1 and 10-fold protection against T5. In Escherichia coli (strain TW11681), this protein is Cyclic GMP-AMP synthase.